The primary structure comprises 34 residues: Trypsin inhibitor 2 (34 aa).

Residues 1-34 constitute a cross-link (cyclopeptide (Ser-Gly)); sequence SGSDGGVCPKILKKCRRDSDCPGACICRGNGYCG. A cross-link ((2-aminosuccinimidyl)acetic acid (Asp-Gly); alternate) is located at residues 4 to 5; that stretch reads DG. Residues 4 to 5 constitute a cross-link (isoaspartyl glycine isopeptide (Asp-Gly); alternate); sequence DG. 3 disulfides stabilise this stretch: Cys-8–Cys-25, Cys-15–Cys-27, and Cys-21–Cys-33.

A cyclic succinimide probably forms by loss of water between Asp-4 and Gly-5, that can then rehydrate to either the original peptide bond or to a beta-aspartyl isopeptide bond. Three isoforms of MCoTI-II are detected, two with the parent molecular weight, corresponding to the unmodified and proposed isopeptide forms, and one with a molecular weight 18 Da lower, corresponding to a succinimide cross-linked form. In terms of processing, this is a cyclic peptide.

Its subcellular location is the secreted. In terms of biological role, inhibits trypsin; probably participates in a plant defense mechanism. The chain is Trypsin inhibitor 2 from Momordica cochinchinensis (Spiny bitter cucumber).